The chain runs to 964 residues: Glycine dehydrogenase (decarboxylating) (964 aa).

Residues 1-10 show a composition bias toward polar residues; the sequence is MNSTLQNRNR. Residues 1-25 form a disordered region; the sequence is MNSTLQNRNRTNLERVSTDPLDTFP. Lysine 713 carries the N6-(pyridoxal phosphate)lysine modification.

Belongs to the GcvP family. The glycine cleavage system is composed of four proteins: P, T, L and H. It depends on pyridoxal 5'-phosphate as a cofactor.

The catalysed reaction is N(6)-[(R)-lipoyl]-L-lysyl-[glycine-cleavage complex H protein] + glycine + H(+) = N(6)-[(R)-S(8)-aminomethyldihydrolipoyl]-L-lysyl-[glycine-cleavage complex H protein] + CO2. The glycine cleavage system catalyzes the degradation of glycine. The P protein binds the alpha-amino group of glycine through its pyridoxal phosphate cofactor; CO(2) is released and the remaining methylamine moiety is then transferred to the lipoamide cofactor of the H protein. The chain is Glycine dehydrogenase (decarboxylating) from Leptospira borgpetersenii serovar Hardjo-bovis (strain JB197).